A 244-amino-acid chain; its full sequence is Glucosamine-6-phosphate deaminase (244 aa).

Catalysis depends on D67, which acts as the Proton acceptor; for enolization step. Catalysis depends on N133, which acts as the For ring-opening step. H135 functions as the Proton acceptor; for ring-opening step in the catalytic mechanism. E140 (for ring-opening step) is an active-site residue.

Belongs to the glucosamine/galactosamine-6-phosphate isomerase family. NagB subfamily.

It catalyses the reaction alpha-D-glucosamine 6-phosphate + H2O = beta-D-fructose 6-phosphate + NH4(+). The protein operates within amino-sugar metabolism; N-acetylneuraminate degradation; D-fructose 6-phosphate from N-acetylneuraminate: step 5/5. Catalyzes the reversible isomerization-deamination of glucosamine 6-phosphate (GlcN6P) to form fructose 6-phosphate (Fru6P) and ammonium ion. The polypeptide is Glucosamine-6-phosphate deaminase (Mycoplasma mycoides subsp. mycoides SC (strain CCUG 32753 / NCTC 10114 / PG1)).